Reading from the N-terminus, the 240-residue chain is Probable septum site-determining protein MinC (240 aa).

It belongs to the MinC family. Interacts with MinD and FtsZ.

Its function is as follows. Cell division inhibitor that blocks the formation of polar Z ring septums. Rapidly oscillates between the poles of the cell to destabilize FtsZ filaments that have formed before they mature into polar Z rings. Prevents FtsZ polymerization. This Chromobacterium violaceum (strain ATCC 12472 / DSM 30191 / JCM 1249 / CCUG 213 / NBRC 12614 / NCIMB 9131 / NCTC 9757 / MK) protein is Probable septum site-determining protein MinC.